We begin with the raw amino-acid sequence, 237 residues long: CD209 antigen-like protein D (237 aa).

Over 1-54 (MSDSMESKTQQVVIPEDEECLMSGTRYSDISSRLQTKFGIKSLAEYTKQSRNPL) the chain is Cytoplasmic. The helical; Signal-anchor for type II membrane protein transmembrane segment at 55 to 75 (VLQLLSFLFLAGLLLIILILV) threads the bilayer. The Extracellular portion of the chain corresponds to 76–237 (SKVPSSEVQN…KVSTSSCTTK (162 aa)). A disulfide bond links cysteine 106 and cysteine 117. Residues 112–227 (FFNGSCYFFS…CDKLLFWICK (116 aa)) enclose the C-type lectin domain. 2 N-linked (GlcNAc...) asparagine glycosylation sites follow: asparagine 114 and asparagine 129. Cystine bridges form between cysteine 134/cysteine 226 and cysteine 205/cysteine 218. 5 residues coordinate Ca(2+): glutamate 196, asparagine 198, glutamate 203, asparagine 214, and aspartate 215.

It is found in the membrane. In terms of biological role, probable pathogen-recognition receptor. May mediate the endocytosis of pathogens which are subsequently degraded in lysosomal compartments. May recognize in a calcium-dependent manner high mannose N-linked oligosaccharides in a variety of pathogen antigens. The polypeptide is CD209 antigen-like protein D (Cd209d) (Mus musculus (Mouse)).